A 377-amino-acid polypeptide reads, in one-letter code: Chaperone protein DnaJ (377 aa).

The J domain occupies 5 to 70 (DYYEVLGVGR…NKKAAYDQFG (66 aa)). The CR-type zinc finger occupies 133–211 (GLTKELRIPT…CHGDGRVEKT (79 aa)). Zn(2+)-binding residues include Cys-146, Cys-149, Cys-163, Cys-166, Cys-185, Cys-188, Cys-199, and Cys-202. 4 CXXCXGXG motif repeats span residues 146–153 (CDVCDGSG), 163–170 (CGTCHGQG), 185–192 (CPTCHGRG), and 199–206 (CSKCHGDG).

Belongs to the DnaJ family. In terms of assembly, homodimer. Zn(2+) is required as a cofactor.

Its subcellular location is the cytoplasm. Its function is as follows. Participates actively in the response to hyperosmotic and heat shock by preventing the aggregation of stress-denatured proteins and by disaggregating proteins, also in an autonomous, DnaK-independent fashion. Unfolded proteins bind initially to DnaJ; upon interaction with the DnaJ-bound protein, DnaK hydrolyzes its bound ATP, resulting in the formation of a stable complex. GrpE releases ADP from DnaK; ATP binding to DnaK triggers the release of the substrate protein, thus completing the reaction cycle. Several rounds of ATP-dependent interactions between DnaJ, DnaK and GrpE are required for fully efficient folding. Also involved, together with DnaK and GrpE, in the DNA replication of plasmids through activation of initiation proteins. This Shewanella sp. (strain ANA-3) protein is Chaperone protein DnaJ.